The primary structure comprises 336 residues: Glycerol-3-phosphate dehydrogenase [NAD(P)+] (336 aa).

4 residues coordinate NADPH: S16, Y17, H37, and K111. Sn-glycerol 3-phosphate contacts are provided by K111, G140, and T142. Residue A144 participates in NADPH binding. Residues K196, D249, S259, R260, and N261 each contribute to the sn-glycerol 3-phosphate site. The active-site Proton acceptor is the K196. An NADPH-binding site is contributed by R260. Residues V284 and E286 each contribute to the NADPH site.

Belongs to the NAD-dependent glycerol-3-phosphate dehydrogenase family.

It localises to the cytoplasm. The catalysed reaction is sn-glycerol 3-phosphate + NAD(+) = dihydroxyacetone phosphate + NADH + H(+). It catalyses the reaction sn-glycerol 3-phosphate + NADP(+) = dihydroxyacetone phosphate + NADPH + H(+). The protein operates within membrane lipid metabolism; glycerophospholipid metabolism. Its function is as follows. Catalyzes the reduction of the glycolytic intermediate dihydroxyacetone phosphate (DHAP) to sn-glycerol 3-phosphate (G3P), the key precursor for phospholipid synthesis. This is Glycerol-3-phosphate dehydrogenase [NAD(P)+] from Glaesserella parasuis serovar 5 (strain SH0165) (Haemophilus parasuis).